Consider the following 85-residue polypeptide: MTILASISSIGNIKSSSKSNIASFSSSSLQSLNSIQCCSCSPALGNTVGNLVGGVLFGTGVIVGSVLNTVGNITTPILHPDCGCN.

It belongs to the hssA/B family.

The sequence is that of HssA/B-like protein 59 (hssl59) from Dictyostelium discoideum (Social amoeba).